The chain runs to 643 residues: Clathrin interactor 1 (643 aa).

In terms of domain architecture, ENTH spans 16–149; the sequence is NVVMNYSEIE…QDDDRLREER (134 aa). Arginine 29 contacts a 1,2-diacyl-sn-glycero-3-phospho-(1D-myo-inositol-4,5-bisphosphate). The tract at residues 52 to 54 is interaction with VTI1B; sequence FMY. Position 67 (arginine 67) interacts with a 1,2-diacyl-sn-glycero-3-phospho-(1D-myo-inositol-4,5-bisphosphate). 2 interaction with VTI1B regions span residues 94–96 and 142–153; these read SER and DDRLREERKKAK. Phosphoserine is present on residues serine 163, serine 166, serine 173, serine 205, serine 210, serine 227, serine 245, and serine 299. Residues 219-331 form a disordered region; sequence FRRKDREDSP…SSGDLVDLFD (113 aa). Over residues 222–239 the composition is skewed to basic and acidic residues; sequence KDREDSPERCSDSDEEKK. Residues 300–310 show a composition bias toward polar residues; that stretch reads PDQNASTHTPQ. Threonine 308 is subject to Phosphothreonine. The span at 311–323 shows a compositional bias: low complexity; the sequence is SSLKTSVPSSKSS. A phosphoserine mark is found at serine 312 and serine 642.

It belongs to the epsin family. Binds clathrin heavy chain and AP-2. Interacts with VTI1B. Interacts with GGA2 (via GAE domain). Interacts with AP1G1 (via GAE domain). Interacts with AP1G2 (via GAE domain).

It is found in the cytoplasm. Its subcellular location is the perinuclear region. It localises to the membrane. The protein resides in the cytoplasmic vesicle. The protein localises to the clathrin-coated vesicle. In terms of biological role, binds to membranes enriched in phosphatidylinositol 4,5-bisphosphate (PtdIns(4,5)P2). May have a role in transport via clathrin-coated vesicles from the trans-Golgi network to endosomes. Stimulates clathrin assembly. The polypeptide is Clathrin interactor 1 (CLINT1) (Bos taurus (Bovine)).